A 44-amino-acid polypeptide reads, in one-letter code: Protein PsbN (44 aa).

A helical membrane pass occupies residues 7–29 (FFTTFLGCLLLSITGYSIYVGFG).

It belongs to the PsbN family.

The protein localises to the plastid. Its subcellular location is the chloroplast thylakoid membrane. Its function is as follows. May play a role in photosystem I and II biogenesis. In Pleurastrum terricola (Filamentous green alga), this protein is Protein PsbN.